A 408-amino-acid polypeptide reads, in one-letter code: Lysosomal phospholipase A and acyltransferase (408 aa).

Residues 1 to 31 form the signal peptide; sequence MGLRRGPCPAALLPGGFLFLLLLADPALLAG. Substrate is bound at residue Asp-42. Cysteines 61 and 85 form a disulfide. Asn-95 carries N-linked (GlcNAc...) asparagine glycosylation. The Acyl-ester intermediate role is filled by Ser-194. Ser-194 lines the Zn(2+) pocket. Met-195 provides a ligand contact to substrate. 2 N-linked (GlcNAc...) asparagine glycosylation sites follow: Asn-269 and Asn-285. Zn(2+)-binding residues include Asp-336 and Cys-351. Active-site charge relay system residues include Asp-356 and His-388. His-388 is a binding site for Zn(2+). A glycan (N-linked (GlcNAc...) asparagine) is linked at Asn-394.

The protein belongs to the AB hydrolase superfamily. Lipase family. Post-translationally, N-glycosylated. N-glycosylation is important for maturation of the enzyme and normal subcellular location.

Its subcellular location is the secreted. It localises to the lysosome. The protein localises to the membrane. It catalyses the reaction a 1,2-diacyl-sn-glycero-3-phosphocholine + H2O = a 2-acyl-sn-glycero-3-phosphocholine + a fatty acid + H(+). It carries out the reaction 1-hexadecanoyl-2-(9Z-octadecenoyl)-sn-glycero-3-phosphocholine + H2O = 2-(9Z-octadecenoyl)-sn-glycero-3-phosphocholine + hexadecanoate + H(+). The enzyme catalyses 1,2-di-(9Z-octadecenoyl)-sn-glycero-3-phosphocholine + H2O = 2-(9Z-octadecenoyl)-sn-glycero-3-phosphocholine + (9Z)-octadecenoate + H(+). The catalysed reaction is 1-hexadecanoyl-2-glutaroyl-sn-glycero-3-phosphocholine + H2O = 2-glutaroyl-sn-glycero-3-phosphocholine + hexadecanoate + H(+). It catalyses the reaction 1-hexadecanoyl-2-nonadioyl-sn-glycero-3-phosphocholine + H2O = 2-nonadioyl-sn-glycero-3-phosphocholine + hexadecanoate + H(+). It carries out the reaction 1-hexadecanoyl-2-(5-oxopentanoyl)-sn-glycero-3-phosphocholine + H2O = 2-(5-oxopentanoyl)-sn-glycero-3-phosphocholine + hexadecanoate + H(+). The enzyme catalyses 1-hexadecanoyl-2-(9-oxononanoyl)-sn-glycero-3-phosphocholine + H2O = 2-(9-oxononanoyl)-sn-glycero-3-phosphocholine + hexadecanoate + H(+). The catalysed reaction is 1,2-dihexadecanoyl-sn-glycero-3-phosphocholine + H2O = 2-hexadecanoyl-sn-glycero-3-phosphocholine + hexadecanoate + H(+). It catalyses the reaction a 1,2-diacyl-sn-glycero-3-phosphocholine + H2O = a 1-acyl-sn-glycero-3-phosphocholine + a fatty acid + H(+). It carries out the reaction 1-hexadecanoyl-2-(9Z-octadecenoyl)-sn-glycero-3-phosphocholine + H2O = 1-hexadecanoyl-sn-glycero-3-phosphocholine + (9Z)-octadecenoate + H(+). The enzyme catalyses 1,2-di-(9Z-octadecenoyl)-sn-glycero-3-phosphocholine + H2O = 1-(9Z-octadecenoyl)-sn-glycero-3-phosphocholine + (9Z)-octadecenoate + H(+). The catalysed reaction is 1,2-dihexadecanoyl-sn-glycero-3-phosphocholine + H2O = 1-hexadecanoyl-sn-glycero-3-phosphocholine + hexadecanoate + H(+). It catalyses the reaction a 1-acyl-sn-glycero-3-phosphocholine + H2O = sn-glycerol 3-phosphocholine + a fatty acid + H(+). It carries out the reaction 1-hexadecanoyl-sn-glycero-3-phosphocholine + H2O = sn-glycerol 3-phosphocholine + hexadecanoate + H(+). The enzyme catalyses N-(acetyl)-sphing-4-enine + a 1,2-diacyl-sn-glycero-3-phosphoethanolamine = 1-O-acyl-N-(acetyl)-sphing-4-enine + a 2-acyl-sn-glycero-3-phosphoethanolamine. The catalysed reaction is 1-hexadecanoyl-2-(9Z-octadecenoyl)-sn-glycero-3-phosphoethanolamine + N-(acetyl)-sphing-4-enine = 2-(9Z-octadecenoyl)-sn-glycero-3-phosphoethanolamine + 1-hexadecanoyl-N-(acetyl)-sphing-4-enine. It catalyses the reaction 1-hexadecanoyl-2-(9Z,12Z-octadecadienoyl)-sn-glycero-3-phosphoethanolamine + N-(acetyl)-sphing-4-enine = 2-(9Z,12Z)-octadecadienoyl-sn-glycero-3-phosphoethanolamine + 1-hexadecanoyl-N-(acetyl)-sphing-4-enine. It carries out the reaction 1-hexadecanoyl-2-(5Z,8Z,11Z,14Z-eicosatetraenoyl)-sn-glycero-3-phosphoethanolamine + N-(acetyl)-sphing-4-enine = 2-(5Z,8Z,11Z,14Z)-eicosatetraenoyl-sn-glycero-3-phosphoethanolamine + 1-hexadecanoyl-N-(acetyl)-sphing-4-enine. The enzyme catalyses N-(acetyl)-sphing-4-enine + a 1,2-diacyl-sn-glycero-3-phosphoethanolamine = 1-O-acyl-N-(acetyl)-sphing-4-enine + a 1-acyl-sn-glycero-3-phosphoethanolamine. The catalysed reaction is 1-hexadecanoyl-2-(9Z-octadecenoyl)-sn-glycero-3-phosphoethanolamine + N-(acetyl)-sphing-4-enine = 1-(9Z-octadecenoyl)-N-(acetyl)-sphing-4-enine + 1-hexadecanoyl-sn-glycero-3-phosphoethanolamine. It catalyses the reaction 1-hexadecanoyl-2-(9Z,12Z-octadecadienoyl)-sn-glycero-3-phosphoethanolamine + N-(acetyl)-sphing-4-enine = 1-(9Z,12Z-octadecadienoyl)-N-acetylsphing-4-enine + 1-hexadecanoyl-sn-glycero-3-phosphoethanolamine. It carries out the reaction 1-hexadecanoyl-2-(5Z,8Z,11Z,14Z-eicosatetraenoyl)-sn-glycero-3-phosphoethanolamine + N-(acetyl)-sphing-4-enine = 1-(5Z,8Z,11Z,14Z)-eicosatetraenoyl-N-(acetyl)-sphing-4-enine + 1-hexadecanoyl-sn-glycero-3-phosphoethanolamine. The enzyme catalyses N-(acetyl)-sphing-4-enine + a 1,2-diacyl-sn-glycero-3-phosphocholine = 1-O-acyl-N-(acetyl)-sphing-4-enine + a 2-acyl-sn-glycero-3-phosphocholine. The catalysed reaction is 1-hexadecanoyl-2-(9Z-octadecenoyl)-sn-glycero-3-phosphocholine + N-(acetyl)-sphing-4-enine = 1-hexadecanoyl-N-(acetyl)-sphing-4-enine + 2-(9Z-octadecenoyl)-sn-glycero-3-phosphocholine. It catalyses the reaction 1-hexadecanoyl-2-(9Z,12Z-octadecadienoyl)-sn-glycero-3-phosphocholine + N-(acetyl)-sphing-4-enine = 2-(9Z,12Z-octadecadienoyl)-sn-glycero-3-phosphocholine + 1-hexadecanoyl-N-(acetyl)-sphing-4-enine. It carries out the reaction 1-hexadecanoyl-2-(5Z,8Z,11Z,14Z-eicosatetraenoyl)-sn-glycero-3-phosphocholine + N-(acetyl)-sphing-4-enine = 1-hexadecanoyl-N-(acetyl)-sphing-4-enine + 2-(5Z,8Z,11Z,14Z)-eicosatetraenoyl-sn-glycero-3-phosphocholine. The enzyme catalyses 1-hexadecanoyl-2-(4Z,7Z,10Z,13Z,16Z,19Z-docosahexaenoyl)-sn-glycero-3-phosphocholine + N-(acetyl)-sphing-4-enine = 2-(4Z,7Z,10Z,13Z,16Z,19Z-docosahexaenoyl)-sn-glycero-3-phosphocholine + 1-hexadecanoyl-N-(acetyl)-sphing-4-enine. The catalysed reaction is 1-hexadecanoyl-2-nonadioyl-sn-glycero-3-phosphocholine + N-(acetyl)-sphing-4-enine = 2-nonadioyl-sn-glycero-3-phosphocholine + 1-hexadecanoyl-N-(acetyl)-sphing-4-enine. It catalyses the reaction 1-octadecanoyl-2-(9Z-octadecenoyl)-sn-glycero-3-phosphocholine + N-(acetyl)-sphing-4-enine = 1-octadecanoyl-N-(acetyl)-sphing-4-enine + 2-(9Z-octadecenoyl)-sn-glycero-3-phosphocholine. It carries out the reaction 1-(9Z)-octadecenoyl-2-octadecanoyl-sn-glycero-3-phosphocholine + N-(acetyl)-sphing-4-enine = 2-octadecanoyl-sn-glycero-3-phosphocholine + 1-(9Z-octadecenoyl)-N-(acetyl)-sphing-4-enine. The enzyme catalyses 1-octadecanoyl-2-(5Z,8Z,11Z,14Z-eicosatetraenoyl)-sn-glycero-3-phosphocholine + N-(acetyl)-sphing-4-enine = 1-octadecanoyl-N-(acetyl)-sphing-4-enine + 2-(5Z,8Z,11Z,14Z)-eicosatetraenoyl-sn-glycero-3-phosphocholine. The catalysed reaction is 1-(9Z-octadecenoyl)-2-hexadecanoyl-sn-glycero-3-phosphocholine + N-(acetyl)-sphing-4-enine = 1-(9Z-octadecenoyl)-N-(acetyl)-sphing-4-enine + 2-hexadecanoyl-sn-glycero-3-phosphocholine. It catalyses the reaction N-(acetyl)-sphing-4-enine + a 1,2-diacyl-sn-glycero-3-phosphocholine = 1-O-acyl-N-(acetyl)-sphing-4-enine + a 1-acyl-sn-glycero-3-phosphocholine. It carries out the reaction 1-hexadecanoyl-2-(9Z-octadecenoyl)-sn-glycero-3-phosphocholine + N-(acetyl)-sphing-4-enine = 1-(9Z-octadecenoyl)-N-(acetyl)-sphing-4-enine + 1-hexadecanoyl-sn-glycero-3-phosphocholine. The enzyme catalyses 1-hexadecanoyl-2-(9Z,12Z-octadecadienoyl)-sn-glycero-3-phosphocholine + N-(acetyl)-sphing-4-enine = 1-(9Z,12Z-octadecadienoyl)-N-acetylsphing-4-enine + 1-hexadecanoyl-sn-glycero-3-phosphocholine. The catalysed reaction is 1-hexadecanoyl-2-(5Z,8Z,11Z,14Z-eicosatetraenoyl)-sn-glycero-3-phosphocholine + N-(acetyl)-sphing-4-enine = 1-(5Z,8Z,11Z,14Z)-eicosatetraenoyl-N-(acetyl)-sphing-4-enine + 1-hexadecanoyl-sn-glycero-3-phosphocholine. It catalyses the reaction 1-hexadecanoyl-2-(4Z,7Z,10Z,13Z,16Z,19Z-docosahexaenoyl)-sn-glycero-3-phosphocholine + N-(acetyl)-sphing-4-enine = 1-(4Z,7Z,10Z,13Z,16Z,19Z-docosahexaenoyl)-N-(acetyl)-sphing-4-enine + 1-hexadecanoyl-sn-glycero-3-phosphocholine. It carries out the reaction 1-octadecanoyl-2-(9Z-octadecenoyl)-sn-glycero-3-phosphocholine + N-(acetyl)-sphing-4-enine = 1-(9Z-octadecenoyl)-N-(acetyl)-sphing-4-enine + 1-octadecanoyl-sn-glycero-3-phosphocholine. The enzyme catalyses 1-octadecanoyl-2-(9Z,12Z)-octadecadienoyl-sn-glycero-3-phosphocholine + N-(acetyl)-sphing-4-enine = 1-(9Z,12Z-octadecadienoyl)-N-acetylsphing-4-enine + 1-octadecanoyl-sn-glycero-3-phosphocholine. The catalysed reaction is 1-(9Z-octadecenoyl)-2-hexadecanoyl-sn-glycero-3-phosphocholine + N-(acetyl)-sphing-4-enine = 1-hexadecanoyl-N-(acetyl)-sphing-4-enine + 1-(9Z-octadecenoyl)-sn-glycero-3-phosphocholine. It catalyses the reaction 1-(9Z)-octadecenoyl-2-octadecanoyl-sn-glycero-3-phosphocholine + N-(acetyl)-sphing-4-enine = 1-octadecanoyl-N-(acetyl)-sphing-4-enine + 1-(9Z-octadecenoyl)-sn-glycero-3-phosphocholine. It carries out the reaction 1,2-di-(9Z-octadecenoyl)-sn-glycero-3-phosphocholine + N-(acetyl)-sphing-4-enine = 1-(9Z-octadecenoyl)-N-(acetyl)-sphing-4-enine + 1-(9Z-octadecenoyl)-sn-glycero-3-phosphocholine. The enzyme catalyses 1-octadecanoyl-2-(5Z,8Z,11Z,14Z-eicosatetraenoyl)-sn-glycero-3-phosphocholine + N-(acetyl)-sphing-4-enine = 1-(5Z,8Z,11Z,14Z)-eicosatetraenoyl-N-(acetyl)-sphing-4-enine + 1-octadecanoyl-sn-glycero-3-phosphocholine. The catalysed reaction is a 1,2-diacyl-sn-glycero-3-phospho-L-serine + N-(acetyl)-sphing-4-enine = a 2-acyl-sn-glycero-3-phospho-L-serine + 1-O-acyl-N-(acetyl)-sphing-4-enine. It catalyses the reaction 1-octadecanoyl-2-(9Z-octadecenoyl)-sn-glycero-3-phospho-L-serine + N-(acetyl)-sphing-4-enine = 2-(9Z-octadecenoyl)-sn-glycero-3-phospho-L-serine + 1-octadecanoyl-N-(acetyl)-sphing-4-enine. It carries out the reaction a 1,2-diacyl-sn-glycero-3-phospho-L-serine + N-(acetyl)-sphing-4-enine = 1-O-acyl-N-(acetyl)-sphing-4-enine + a 1-acyl-sn-glycero-3-phospho-L-serine. The enzyme catalyses 1-octadecanoyl-2-(9Z-octadecenoyl)-sn-glycero-3-phospho-L-serine + N-(acetyl)-sphing-4-enine = 1-octadecanoyl-sn-glycero-3-phosphoserine + 1-(9Z-octadecenoyl)-N-(acetyl)-sphing-4-enine. The catalysed reaction is a 1,2-diacyl-sn-glycero-3-phospho-(1'-sn-glycerol) + N-(acetyl)-sphing-4-enine = 2-acyl-sn-glycero-3-phospho-(1'-sn-glycerol) + 1-O-acyl-N-(acetyl)-sphing-4-enine. It catalyses the reaction 1-octadecanoyl-2-(9Z-octadecenoyl)-sn-glycero-3-phospho-(1'-sn-glycerol) + N-(acetyl)-sphing-4-enine = 2-(9Z-octadecenoyl)-sn-glycero-3-phospho-(1'-sn-glycerol) + 1-octadecanoyl-N-(acetyl)-sphing-4-enine. It carries out the reaction a 1,2-diacyl-sn-glycero-3-phospho-(1'-sn-glycerol) + N-(acetyl)-sphing-4-enine = 1-O-acyl-N-(acetyl)-sphing-4-enine + 1-acyl-sn-glycero-3-phospho-(1'-sn-glycerol). The enzyme catalyses 1-octadecanoyl-2-(9Z-octadecenoyl)-sn-glycero-3-phospho-(1'-sn-glycerol) + N-(acetyl)-sphing-4-enine = 1-octadecanoyl-sn-glycero-3-phospho-(1'-sn-glycerol) + 1-(9Z-octadecenoyl)-N-(acetyl)-sphing-4-enine. The catalysed reaction is an N-acylethanolamine + a 1,2-diacyl-sn-glycero-3-phosphocholine = 2-(acylamino)ethyl fatty acid + a 2-acyl-sn-glycero-3-phosphocholine. It catalyses the reaction an N-acylethanolamine + a 1,2-diacyl-sn-glycero-3-phosphocholine = 2-(acylamino)ethyl fatty acid + a 1-acyl-sn-glycero-3-phosphocholine. It carries out the reaction N-(5Z,8Z,11Z,14Z-eicosatetraenoyl)-ethanolamine + 1,2-di-(9Z-octadecenoyl)-sn-glycero-3-phosphocholine = 2-[(5Z,8Z,11Z,14Z)-eicosatetraenoylamino]ethyl (9Z)-octadecenoate + (9Z-octadecenoyl)-sn-glycero-3-phosphocholine. The enzyme catalyses N-(9Z-octadecenoyl) ethanolamine + 1,2-di-(9Z-octadecenoyl)-sn-glycero-3-phosphocholine = 2-[(9Z)-octadecenoylamino]ethyl (9Z)-octadecenoate + (9Z-octadecenoyl)-sn-glycero-3-phosphocholine. The catalysed reaction is a 3-acyl-sn-glycerol + a 1,2-diacyl-sn-glycero-3-phosphocholine = a 1,3-diacylglycerol + a 1-acyl-sn-glycero-3-phosphocholine. It catalyses the reaction a 3-acyl-sn-glycerol + a 1,2-diacyl-sn-glycero-3-phosphocholine = a 1,3-diacylglycerol + a 2-acyl-sn-glycero-3-phosphocholine. It carries out the reaction 3-(9Z-octadecenoyl)-sn-glycerol + 1,2-di-(9Z-octadecenoyl)-sn-glycero-3-phosphocholine = 1,3-di-(9Z-octadecenoyl)-glycerol + (9Z-octadecenoyl)-sn-glycero-3-phosphocholine. The enzyme catalyses 3-hexadecanoyl-sn-glycerol + 1,2-di-(9Z-octadecenoyl)-sn-glycero-3-phosphocholine = 1-(9Z)-octadecenoyl-3-hexadecanoyl-sn-glycerol + (9Z-octadecenoyl)-sn-glycero-3-phosphocholine. The catalysed reaction is a 1-acyl-sn-glycerol + a 1,2-diacyl-sn-glycero-3-phosphocholine = a 1,3-diacylglycerol + a 2-acyl-sn-glycero-3-phosphocholine. It catalyses the reaction a 1-acyl-sn-glycerol + a 1,2-diacyl-sn-glycero-3-phosphocholine = a 1,3-diacylglycerol + a 1-acyl-sn-glycero-3-phosphocholine. It carries out the reaction 1-(9Z-octadecenoyl)-sn-glycerol + 1,2-di-(9Z-octadecenoyl)-sn-glycero-3-phosphocholine = 1,3-di-(9Z-octadecenoyl)-glycerol + (9Z-octadecenoyl)-sn-glycero-3-phosphocholine. The enzyme catalyses 1-hexadecanoyl-sn-glycerol + 1,2-di-(9Z-octadecenoyl)-sn-glycero-3-phosphocholine = 1-hexadecanoyl-3-(9Z)-octadecenoyl-sn-glycerol + (9Z-octadecenoyl)-sn-glycero-3-phosphocholine. The catalysed reaction is a 2-acylglycerol + a 1,2-diacyl-sn-glycero-3-phosphocholine = a 1,2-diacylglycerol + a 2-acyl-sn-glycero-3-phosphocholine. It catalyses the reaction a 2-acylglycerol + a 1,2-diacyl-sn-glycero-3-phosphocholine = a 1,2-diacylglycerol + a 1-acyl-sn-glycero-3-phosphocholine. It carries out the reaction 2-hexadecanoylglycerol + 1,2-di-(9Z-octadecenoyl)-sn-glycero-3-phosphocholine = 1-(9Z)-octadecenoyl-2-hexadecanoylglycerol + (9Z-octadecenoyl)-sn-glycero-3-phosphocholine. The enzyme catalyses 1-O-alkylglycerol + a 1,2-diacyl-sn-glycero-3-phosphocholine = 1-O-alkyl-3-acylglycerol + a 1-acyl-sn-glycero-3-phosphocholine. The catalysed reaction is 1-O-alkylglycerol + a 1,2-diacyl-sn-glycero-3-phosphocholine = 1-O-alkyl-3-acylglycerol + a 2-acyl-sn-glycero-3-phosphocholine. It catalyses the reaction 1-O-hexadecylglycerol + 1,2-di-(9Z-octadecenoyl)-sn-glycero-3-phosphocholine = 1-O-hexadecyl-3-(9Z)-octadecenoylglycerol + (9Z-octadecenoyl)-sn-glycero-3-phosphocholine. It carries out the reaction 1-O-alkyl-2-acyl-sn-glycerol + a 1,2-diacyl-sn-glycero-3-phosphocholine = 1-O-alkyl-2,3-diacyl-sn-glycerol + a 2-acyl-sn-glycero-3-phosphocholine. The enzyme catalyses 1-O-alkyl-2-acyl-sn-glycerol + a 1,2-diacyl-sn-glycero-3-phosphocholine = 1-O-alkyl-2,3-diacyl-sn-glycerol + a 1-acyl-sn-glycero-3-phosphocholine. The catalysed reaction is 1-O-hexadecyl-2-acetyl-sn-glycerol + 1,2-di-(9Z-octadecenoyl)-sn-glycero-3-phosphocholine = 1-O-hexadecyl-2-acetyl-3-(9Z)-octadecenoyl-sn-glycerol + (9Z-octadecenoyl)-sn-glycero-3-phosphocholine. It catalyses the reaction 1-O-hexadecyl-2-O-methyl-sn-glycerol + 1,2-di-(9Z-octadecenoyl)-sn-glycero-3-phosphocholine = 1-O-hexadecyl-2-O-methyl-3-(9Z)-octadecenoyl-sn-glycerol + (9Z-octadecenoyl)-sn-glycero-3-phosphocholine. It carries out the reaction a 1,2-diacyl-sn-glycero-3-phosphoethanolamine + H2O = a 1-acyl-sn-glycero-3-phosphoethanolamine + a fatty acid + H(+). The enzyme catalyses 1-acyl-2-(5Z,8Z,11Z,14Z)-eicosatetraenoyl-sn-glycero-3-phosphoethanolamine + H2O = a 1-acyl-sn-glycero-3-phosphoethanolamine + (5Z,8Z,11Z,14Z)-eicosatetraenoate + H(+). The catalysed reaction is a 1,2-diacyl-sn-glycero-3-phospho-(1'-sn-glycerol) + H2O = 1-acyl-sn-glycero-3-phospho-(1'-sn-glycerol) + a fatty acid + H(+). It catalyses the reaction 1-hexadecanoyl-2-(9Z-octadecenoyl)-sn-glycero-3-phospho-(1'-sn-glycerol) + H2O = 1-hexadecanoyl-sn-glycero-3-phospho-(1'-sn-glycerol) + (9Z)-octadecenoate + H(+). It carries out the reaction a 1,2-diacyl-sn-glycero-3-phospho-(1'-sn-glycerol) + H2O = 2-acyl-sn-glycero-3-phospho-(1'-sn-glycerol) + a fatty acid + H(+). The enzyme catalyses 1-hexadecanoyl-2-(9Z-octadecenoyl)-sn-glycero-3-phospho-(1'-sn-glycerol) + H2O = 2-(9Z-octadecenoyl)-sn-glycero-3-phospho-(1'-sn-glycerol) + hexadecanoate + H(+). Has dual calcium-independent phospholipase and O-acyltransferase activities with a potential role in glycerophospholipid homeostasis and remodeling of acyl groups of lipophilic alcohols present in acidic cellular compartments. Catalyzes hydrolysis of the ester bond of the fatty acyl group attached at sn-1 or sn-2 position of phospholipids (phospholipase A1 or A2 activity) and transfer it to the hydroxyl group at the first carbon of lipophilic alcohols (O-acyltransferase activity). Among preferred fatty acyl donors are phosphatidylcholines, phosphatidylethanolamines, phosphatidylglycerols and phosphatidylserines. Favors sn-2 over sn-1 deacylation of unsaturated fatty acyl groups of phosphatidylcholines, phosphatidylethanolamines, and phosphatidylglycerols. Among preferred fatty acyl acceptors are natural lipophilic alcohols including short-chain ceramide N-acetyl-sphingosine (C2 ceramide), alkylacylglycerols, monoacylglycerols, and acylethanolamides such as anandamide and oleoylethanolamide. Selectively hydrolyzes the sn-1 fatty acyl group of truncated oxidized phospholipids and may play a role in detoxification of reactive oxidized phospholipids during oxidative stress. Required for normal phospholipid degradation in alveolar macrophages with potential implications in the clearance of pulmonary surfactant, which is mainly composed of dipalmitoylphosphatidylcholine (1,2-dihexadecanoyl-sn-glycero-3-phosphocholine). Involved in the first step of bis(monoacylglycero)phosphate (BMP) de novo synthesis from phosphatidylglycerol (1,2-diacyl-sn-glycero-3-phospho-(1'-sn-glycerol), PG). BMP is an important player in cargo sorting and degradation, regulation of cellular cholesterol levels and intercellular communication. At neutral pH, hydrolyzes the sn-1 fatty acyl group of the lysophosphatidylcholines. The polypeptide is Lysosomal phospholipase A and acyltransferase (PLA2G15) (Canis lupus familiaris (Dog)).